Here is a 130-residue protein sequence, read N- to C-terminus: Small ribosomal subunit protein uS9 (130 aa).

This sequence belongs to the universal ribosomal protein uS9 family.

The sequence is that of Small ribosomal subunit protein uS9 from Magnetococcus marinus (strain ATCC BAA-1437 / JCM 17883 / MC-1).